A 150-amino-acid polypeptide reads, in one-letter code: Transcriptional repressor NrdR (150 aa).

The segment at 3–34 (CPFCAHPDSKVVDSRPDKGGAAIRRRRECESC) is a zinc-finger region. An ATP-cone domain is found at 49-139 (PLVLKKDGRR…VYRSFKDVNE (91 aa)).

The protein belongs to the NrdR family. Requires Zn(2+) as cofactor.

Functionally, negatively regulates transcription of bacterial ribonucleotide reductase nrd genes and operons by binding to NrdR-boxes. In Geobacter metallireducens (strain ATCC 53774 / DSM 7210 / GS-15), this protein is Transcriptional repressor NrdR.